An 897-amino-acid chain; its full sequence is Protein translocase subunit SecA (897 aa).

Residues Gln89, 107–111 (GEGKT), and Asp517 contribute to the ATP site. The segment covering 839-856 (DDAQATHSNPNEQTKQAS) has biased composition (polar residues). Residues 839–897 (DDAQATHSNPNEQTKQASITNNIQTQTDQQNTYQRKEKKVGRNEPCPCGSGKKYKKCHG) are disordered. Low complexity predominate over residues 857 to 870 (ITNNIQTQTDQQNT). Cys884, Cys886, Cys895, and His896 together coordinate Zn(2+).

The protein belongs to the SecA family. As to quaternary structure, monomer and homodimer. Part of the essential Sec protein translocation apparatus which comprises SecA, SecYEG and auxiliary proteins SecDF-YajC and YidC. The cofactor is Zn(2+).

The protein resides in the cell inner membrane. The protein localises to the cytoplasm. It carries out the reaction ATP + H2O + cellular proteinSide 1 = ADP + phosphate + cellular proteinSide 2.. Its function is as follows. Part of the Sec protein translocase complex. Interacts with the SecYEG preprotein conducting channel. Has a central role in coupling the hydrolysis of ATP to the transfer of proteins into and across the cell membrane, serving as an ATP-driven molecular motor driving the stepwise translocation of polypeptide chains across the membrane. In Vesicomyosocius okutanii subsp. Calyptogena okutanii (strain HA), this protein is Protein translocase subunit SecA.